We begin with the raw amino-acid sequence, 397 residues long: MATIFFAEPELVIGHGRKVLFLNPGDLQIFKEIELPPDLTTCGLKTVEPVPAPGHPASSSKQQPAALKEATGSVKVEVSIQNVTYSPDRQLLALTTAGQKAVLLYKSRPENAQLLSIRPLARASSAPKVLQRWQLPFWSLTKREIAINTSVLRWMPRHVCFLGHLSIVYDVLWSEDQQYIITCDRDDKIRVTNYPATFDIHSYCLGHKEFVSGLAMLTEQHIISASGDKTLRVWNYTCGKELLLHELPAPAVRMLVRQLEPEKTYEVAVLFYDYVDAIGVYRLEQTTTESWSITSTQLVRAEAGTWNICNFALTDDRIYVTGAENERLTLRVYDSRNGERASGLPEGWLKMVLDNLDVAAFMPEDLSVWFKKRFDNVSDYLERKKRRIEEQKQQKCG.

4 WD repeats span residues 75–115 (KVEV…AQLL), 163–202 (GHLSIVYDVLWSEDQQYIITCDRDDKIRVTNYPATFDIHS), 206–244 (GHKEFVSGLAMLTEQHIISASGDKTLRVWNYTCGKELLL), and 303–343 (AGTW…RASG).

The protein belongs to the WD repeat TRM82 family. As to quaternary structure, forms a heterodimer with the catalytic subunit Mettl1. Interacts with mei-P26 and weakly interacts with bgcn; required for the function or formation of the mei-P26-bgcn-bam-sxl complex. Interacts with nanos; may be involved in mei-P26-dependent derepression of the BMP signaling pathway. Interacts with Myc; the interaction may be mediated by mei-P26 and may be involved in the regulation of ribosome biogenesis. As to expression, in testis, it is present at high level in hub cells, a niche for germline stem cells of testis. Ubiquitously expressed in all testicular cells throughout spermatogenesis. Ubiquitously expressed in all germline and somatic cells of the ovary.

The protein localises to the nucleus. The protein resides in the cytoplasm. It participates in tRNA modification; N(7)-methylguanine-tRNA biosynthesis. Its function is as follows. Required for the Mettl1-dependent formation of N(7)-methylguanine at position 46 (m7G46) in tRNA. In the Mettl1-wuho methyltransferase complex, it is required to stabilize and induce conformational changes of the catalytic subunit. Required for binding of nanos mRNA and repression of translation by the mei-P26-bgcn-bam-sxl complex. May cooperate with mei-P26 and nanos to derepress the BMP signaling pathway. May cooperate with mei-P26 to suppress expression of a subset of microRNAs. May cooperate with mei-P26 to regulate bam expression levels in germline cells during gametogenesis. Required to promote mitosis to meiosis transition during gametogenesis. May regulate germline cell division in part by regulating ribosome biogenesis. The chain is tRNA (guanine-N(7)-)-methyltransferase non-catalytic subunit wuho from Drosophila persimilis (Fruit fly).